The primary structure comprises 206 residues: Ribosomal RNA small subunit methyltransferase G (206 aa).

Residues Gly71, Phe76, 122-123, and Arg135 contribute to the S-adenosyl-L-methionine site; that span reads AE.

This sequence belongs to the methyltransferase superfamily. RNA methyltransferase RsmG family.

The protein localises to the cytoplasm. Functionally, specifically methylates the N7 position of a guanine in 16S rRNA. The sequence is that of Ribosomal RNA small subunit methyltransferase G from Bacteroides fragilis (strain ATCC 25285 / DSM 2151 / CCUG 4856 / JCM 11019 / LMG 10263 / NCTC 9343 / Onslow / VPI 2553 / EN-2).